A 315-amino-acid polypeptide reads, in one-letter code: ADP/ATP translocase 4 (315 aa).

The Mitochondrial intermembrane segment spans residues 1 to 19; sequence MHREPAKKKAEKRLFDASS. A Solcar 1 repeat occupies 18-110; the sequence is SSFGKDLLAG…FAFKDKYKQL (93 aa). A helical membrane pass occupies residues 20–49; that stretch reads FGKDLLAGGVAAAVSKTAVAPIERVKLLLQ. Residues 50–86 lie on the Mitochondrial matrix side of the membrane; sequence VQASSKQISPEARYKGMVDCLVRIPREQGFFSFWRGN. The helical transmembrane segment at 87–111 threads the bilayer; sequence LANVIRYFPTQALNFAFKDKYKQLF. ADP is bound by residues arginine 92 and lysine 104. Topologically, residues 112-121 are mitochondrial intermembrane; sequence MSGVNKEKQF. The chain crosses the membrane as a helical span at residues 122–142; sequence WRWFLANLASGGAAGATSLCV. Solcar repeat units follow at residues 123 to 213 and 220 to 307; these read RWFL…VKGL and TPFL…IKEF. Over 143–190 the chain is Mitochondrial matrix; it reads VYPLDFARTRLGVDIGKGPEERQFKGLGDCIMKIAKSDGIAGLYQGFG. Residues 191–211 traverse the membrane as a helical segment; sequence VSVQGIIVYRASYFGAYDTVK. The Mitochondrial intermembrane segment spans residues 212–222; that stretch reads GLLPKPKKTPF. The chain crosses the membrane as a helical span at residues 223-243; sequence LVSFFIAQVVTTCSGILSYPF. The Mitochondrial matrix portion of the chain corresponds to 244–283; it reads DTVRRRMMMQSGEAKRQYKGTLDCFVKIYQHEGISSFFRG. Arginine 247 is a binding site for ADP. The tract at residues 247-252 is important for transport activity; it reads RRRMMM. Positions 247-252 match the Nucleotide carrier signature motif motif; that stretch reads RRRMMM. The helical transmembrane segment at 284-301 threads the bilayer; that stretch reads AFSNVLRGTGGALVLVLY. Residues 302 to 315 are Mitochondrial intermembrane-facing; the sequence is DKIKEFFHIDIGGR.

This sequence belongs to the mitochondrial carrier (TC 2.A.29) family. As to quaternary structure, monomer. In terms of tissue distribution, expressed in brain, liver, sperm and testis. In testis, expressed at higher level in spermatocytes, while it is expressed at lower level in spermatogonial cells. Expressed in erythrocytes (at protein level).

The protein localises to the mitochondrion inner membrane. The protein resides in the membrane. Its subcellular location is the cell projection. It is found in the cilium. It localises to the flagellum membrane. The enzyme catalyses ADP(in) + ATP(out) = ADP(out) + ATP(in). It catalyses the reaction dATP(out) + ADP(in) = dATP(in) + ADP(out). It carries out the reaction dADP(in) + ADP(out) = dADP(out) + ADP(in). The catalysed reaction is H(+)(in) = H(+)(out). Its activity is regulated as follows. The matrix-open state (m-state) is inhibited by the membrane-permeable bongkrekic acid (BKA). The cytoplasmic-open state (c-state) is inhibited by the membrane-impermeable toxic inhibitor carboxyatractyloside (CATR). Proton transporter activity is inhibited by ADP:ATP antiporter activity. ADP:ATP antiporter that mediates import of ADP into the mitochondrial matrix for ATP synthesis, and export of ATP out to fuel the cell. Cycles between the cytoplasmic-open state (c-state) and the matrix-open state (m-state): operates by the alternating access mechanism with a single substrate-binding site intermittently exposed to either the cytosolic (c-state) or matrix (m-state) side of the inner mitochondrial membrane. Specifically required during spermatogenesis, probably to mediate ADP:ATP exchange in spermatocytes. Large ATP supplies from mitochondria may be critical for normal progression of spermatogenesis during early stages of meiotic prophase I, including DNA double-strand break repair and chromosomal synapsis. In addition to its ADP:ATP antiporter activity, also involved in mitochondrial uncoupling and mitochondrial permeability transition pore (mPTP) activity. Plays a role in mitochondrial uncoupling by acting as a proton transporter: proton transport uncouples the proton flows via the electron transport chain and ATP synthase to reduce the efficiency of ATP production and cause mitochondrial thermogenesis. Proton transporter activity is inhibited by ADP:ATP antiporter activity, suggesting that SLC25A31/ANT4 acts as a master regulator of mitochondrial energy output by maintaining a delicate balance between ATP production (ADP:ATP antiporter activity) and thermogenesis (proton transporter activity). Proton transporter activity requires free fatty acids as cofactor, but does not transport it. Among nucleotides, may also exchange ADP for dATP and dADP. Also plays a key role in mPTP opening, a non-specific pore that enables free passage of the mitochondrial membranes to solutes of up to 1.5 kDa, and which contributes to cell death. It is however unclear if SLC25A31/ANT4 constitutes a pore-forming component of mPTP or regulates it. In Homo sapiens (Human), this protein is ADP/ATP translocase 4.